Consider the following 468-residue polypeptide: Cyclin-dependent kinase 14 (468 aa).

3 positions are modified to phosphoserine: S24, S77, and S94. Residues 102–131 are disordered; it reads FKSSSAGKESPKVRRHSSPSSPTSPKFGKA. Residue S133 is modified to Phosphoserine. A Protein kinase domain is found at 134–418; that stretch reads YEKLEKLGEG…AQAALSHEYF (285 aa). ATP is bound by residues 140–148 and K163; that span reads LGEGSYATV. Residue D255 is the Proton acceptor of the active site. The segment at 448–468 is disordered; it reads ESMRAFGKNSSYGKSLSNSKH. Polar residues predominate over residues 455-468; it reads KNSSYGKSLSNSKH.

It belongs to the protein kinase superfamily. CMGC Ser/Thr protein kinase family. CDC2/CDKX subfamily. As to quaternary structure, found in a complex with LRP6, CCNY and CAPRIN2 during G2/M stage; CAPRIN2 functions as a scaffold for the complex by binding to CCNY via its N terminus and to CDK14 via its C terminus. Interacts with CCNY; CCNY mediates its recruitment to the plasma membrane and promotes phosphorylation of LRP6. Interacts with CCDN3 and CDKN1A. Interacts with SEPT8. Interacts with 14-3-3 proteina YWHAB, YWHAE, YWHAH and YWHAQ.

Its subcellular location is the cell membrane. It is found in the cytoplasm. The protein localises to the nucleus. The catalysed reaction is L-seryl-[protein] + ATP = O-phospho-L-seryl-[protein] + ADP + H(+). The enzyme catalyses L-threonyl-[protein] + ATP = O-phospho-L-threonyl-[protein] + ADP + H(+). Serine/threonine-protein kinase activity is promoted by associated cyclins CCDN3 and CCNY and repressed by CDKN1A. Functionally, serine/threonine-protein kinase involved in the control of the eukaryotic cell cycle, whose activity is controlled by an associated cyclin. Acts as a cell-cycle regulator of Wnt signaling pathway during G2/M phase by mediating the phosphorylation of LRP6 at 'Ser-1490', leading to the activation of the Wnt signaling pathway. Acts as a regulator of cell cycle progression and cell proliferation via its interaction with CCDN3. Phosphorylates RB1 in vitro, however the relevance of such result remains to be confirmed in vivo. May also play a role in meiosis, neuron differentiation and may indirectly act as a negative regulator of insulin-responsive glucose transport. This is Cyclin-dependent kinase 14 (CDK14) from Oryctolagus cuniculus (Rabbit).